Consider the following 342-residue polypeptide: MASDAAAEPSSGVTHPPRYVIGYALAPKKQQSFIQPSLVAQAASRGMDLVPVDASQPLAEQGPFHLLIHKLYGDDWRAQLVAFAARHPAVPIVDPPHAIDRLHNRISMLQVVSELDHAADQDSTFGIPSQVVVYDAAALADFGLLAALRFPLIAKPLVADGTAKSHKMSLVYHREGLGKLRPPLVLQEFVNHGGVIFKVYVVGGHVTCVKRRSLPDVSPEDDASAQGSVSFSQVSNLPTERTAEEYYGEKSLEDAVVPPAAFINQIAGGLRRALGLQLFNFDMIRDVRAGDRYLVIDINYFPGYAKMPGYETVLTDFFWEMVHKDGVGNQQEEKGANHVVVK.

1D-myo-inositol 6-phosphate contacts are provided by Lys-28 and Lys-70. Positions 105 and 155 each coordinate ATP. Residues Asp-116 to Glu-332 enclose the ATP-grasp domain. 1D-myo-inositol 6-phosphate-binding residues include Gly-161 and His-166. Residues His-166, Gln-187, and Val-190 each coordinate ATP. Residues Lys-198 and Tyr-200 each coordinate 1D-myo-inositol 6-phosphate. Position 213 (Ser-213) interacts with ATP. The tract at residues Pro-219 to Tyr-247 is catalytic specificity elements (CSE). Asn-280 is a binding site for 1D-myo-inositol 6-phosphate. Position 282 (Asp-282) interacts with Mg(2+). Residues Ile-296, Asp-297, and Asn-299 each contribute to the ATP site. Mg(2+)-binding residues include Asp-297 and Asn-299. 1D-myo-inositol 6-phosphate contacts are provided by Asn-299, Gly-303, and Lys-306.

It belongs to the ITPK1 family. As to quaternary structure, monomer. The cofactor is Mg(2+). Expressed in the embryo of 15 day after pollination. Expressed in kernels at earlier stages but at very low levels. Expression in the embryo peaks at 15 days after pollination and then declines. No expression is detected from endosperm and vegetative tissues.

The enzyme catalyses 1D-myo-inositol 3,4,5,6-tetrakisphosphate + ATP = 1D-myo-inositol 1,3,4,5,6-pentakisphosphate + ADP + H(+). The catalysed reaction is 1D-myo-inositol 1,3,4-trisphosphate + ATP = 1D-myo-inositol 1,3,4,5-tetrakisphosphate + ADP + H(+). It carries out the reaction 1D-myo-inositol 1,3,4-trisphosphate + ATP = 1D-myo-inositol 1,3,4,6-tetrakisphosphate + ADP + H(+). It catalyses the reaction 1D-myo-inositol 1,2,3,4,5-pentakisphosphate + ATP = 3-diphospho-1D-myo-inositol 1,2,4,5-tetrakisphosphate + ADP. The enzyme catalyses 1D-myo-inositol hexakisphosphate + ATP = 5-diphospho-1D-myo-inositol 1,2,3,4,6-pentakisphosphate + ADP. Kinase that can phosphorylate various inositol polyphosphate such as Ins(3,4,5,6)P4 or Ins(1,3,4)P3 and participates in phytic acid biosynthesis in developing seeds. Phosphorylates Ins(3,4,5,6)P4 at position 1 to form Ins(1,3,4,5,6)P5. This reaction is thought to have regulatory importance, since Ins(3,4,5,6)P4 is an inhibitor of plasma membrane Ca(2+)-activated Cl(-) channels, while Ins(1,3,4,5,6)P5 is not. Also phosphorylates Ins(1,3,4)P3 on O-5 and O-6 to form Ins(1,3,4,6)P4, an essential molecule in the hexakisphosphate (InsP6) pathway. Also able to phosphorylate Ins(3,5,6)P3 but not Ins(1,4,5)P3, Ins(2,4,5)P3, Ins(1,3,4,6)P4 nor Ins(1,3,5,6)P4. Has higher specific activity on Ins(3,4,5,6)P4 than Ins(1,3,4)P3 and Ins(3,5,6)P3. Can also could use Ins(1,2,5,6)P4 as a substrate. Able to add a beta-phosphate to the 3 positions of Ins(1,2,3,4,5)P5 and to add beta-phosphate to InsP6 to yield 5-InsP7, thus exhibiting InsP6 kinase activity. Also has Ins(1,3,4,5,6)P5 phosphatase activity. The protein is Inositol-tetrakisphosphate 1-kinase 1 of Zea mays (Maize).